We begin with the raw amino-acid sequence, 702 residues long: Threonine--tRNA ligase (702 aa).

The tract at residues 1–30 (MSAPVHPVPGADGGDPLRPATPGLRSPQVP) is disordered. Positions 15–84 (DPLRPATPGL…DVDVEVTPVP (70 aa)) constitute a TGS domain. A catalytic region spans residues 279–585 (DHRKLGIELD…LTEHYAGAFP (307 aa)). Zn(2+) contacts are provided by Cys384, His435, and His562.

This sequence belongs to the class-II aminoacyl-tRNA synthetase family. As to quaternary structure, homodimer. The cofactor is Zn(2+).

Its subcellular location is the cytoplasm. The catalysed reaction is tRNA(Thr) + L-threonine + ATP = L-threonyl-tRNA(Thr) + AMP + diphosphate + H(+). Functionally, catalyzes the attachment of threonine to tRNA(Thr) in a two-step reaction: L-threonine is first activated by ATP to form Thr-AMP and then transferred to the acceptor end of tRNA(Thr). Also edits incorrectly charged L-seryl-tRNA(Thr). This chain is Threonine--tRNA ligase, found in Mycobacterium leprae (strain Br4923).